The primary structure comprises 209 residues: Imidazoleglycerol-phosphate dehydratase (209 aa).

The interval 1–23 is disordered; it reads MQLSDRPLTAPGTAPRQATVSRR.

Belongs to the imidazoleglycerol-phosphate dehydratase family.

It localises to the cytoplasm. It catalyses the reaction D-erythro-1-(imidazol-4-yl)glycerol 3-phosphate = 3-(imidazol-4-yl)-2-oxopropyl phosphate + H2O. It participates in amino-acid biosynthesis; L-histidine biosynthesis; L-histidine from 5-phospho-alpha-D-ribose 1-diphosphate: step 6/9. This is Imidazoleglycerol-phosphate dehydratase from Synechococcus elongatus (strain ATCC 33912 / PCC 7942 / FACHB-805) (Anacystis nidulans R2).